A 468-amino-acid polypeptide reads, in one-letter code: UDP-N-acetylmuramate--L-alanine ligase (468 aa).

Gly122–Thr128 provides a ligand contact to ATP.

This sequence belongs to the MurCDEF family.

The protein resides in the cytoplasm. It catalyses the reaction UDP-N-acetyl-alpha-D-muramate + L-alanine + ATP = UDP-N-acetyl-alpha-D-muramoyl-L-alanine + ADP + phosphate + H(+). It functions in the pathway cell wall biogenesis; peptidoglycan biosynthesis. Cell wall formation. This chain is UDP-N-acetylmuramate--L-alanine ligase, found in Synechococcus sp. (strain CC9902).